A 112-amino-acid polypeptide reads, in one-letter code: Large ribosomal subunit protein uL22 (112 aa).

This sequence belongs to the universal ribosomal protein uL22 family. Part of the 50S ribosomal subunit.

Functionally, this protein binds specifically to 23S rRNA; its binding is stimulated by other ribosomal proteins, e.g. L4, L17, and L20. It is important during the early stages of 50S assembly. It makes multiple contacts with different domains of the 23S rRNA in the assembled 50S subunit and ribosome. In terms of biological role, the globular domain of the protein is located near the polypeptide exit tunnel on the outside of the subunit, while an extended beta-hairpin is found that lines the wall of the exit tunnel in the center of the 70S ribosome. In Caldanaerobacter subterraneus subsp. tengcongensis (strain DSM 15242 / JCM 11007 / NBRC 100824 / MB4) (Thermoanaerobacter tengcongensis), this protein is Large ribosomal subunit protein uL22.